Consider the following 468-residue polypeptide: Glutamate--tRNA ligase 2 (468 aa).

The 'HIGH' region motif lies at 13–23 (PSPTGYLHIGG). Residues 241–245 (KLSKR) carry the 'KMSKS' region motif. Residue K244 coordinates ATP.

Belongs to the class-I aminoacyl-tRNA synthetase family. Glutamate--tRNA ligase type 1 subfamily. As to quaternary structure, monomer.

It is found in the cytoplasm. It carries out the reaction tRNA(Glu) + L-glutamate + ATP = L-glutamyl-tRNA(Glu) + AMP + diphosphate. Catalyzes the attachment of glutamate to tRNA(Glu) in a two-step reaction: glutamate is first activated by ATP to form Glu-AMP and then transferred to the acceptor end of tRNA(Glu). The chain is Glutamate--tRNA ligase 2 from Paracoccus denitrificans (strain Pd 1222).